Here is a 287-residue protein sequence, read N- to C-terminus: Formamidopyrimidine-DNA glycosylase (287 aa).

Proline 2 acts as the Schiff-base intermediate with DNA in catalysis. Glutamate 3 functions as the Proton donor in the catalytic mechanism. Catalysis depends on lysine 58, which acts as the Proton donor; for beta-elimination activity. Residues histidine 104, arginine 123, and arginine 166 each contribute to the DNA site. An FPG-type zinc finger spans residues 251-287; sequence RVYDREGQPCPTPGCKGMIGREVQAGRSTFFCPVCQV. The active-site Proton donor; for delta-elimination activity is arginine 277.

This sequence belongs to the FPG family. Monomer. The cofactor is Zn(2+).

It carries out the reaction Hydrolysis of DNA containing ring-opened 7-methylguanine residues, releasing 2,6-diamino-4-hydroxy-5-(N-methyl)formamidopyrimidine.. The catalysed reaction is 2'-deoxyribonucleotide-(2'-deoxyribose 5'-phosphate)-2'-deoxyribonucleotide-DNA = a 3'-end 2'-deoxyribonucleotide-(2,3-dehydro-2,3-deoxyribose 5'-phosphate)-DNA + a 5'-end 5'-phospho-2'-deoxyribonucleoside-DNA + H(+). In terms of biological role, involved in base excision repair of DNA damaged by oxidation or by mutagenic agents. Acts as a DNA glycosylase that recognizes and removes damaged bases. Has a preference for oxidized purines, such as 7,8-dihydro-8-oxoguanine (8-oxoG). Has AP (apurinic/apyrimidinic) lyase activity and introduces nicks in the DNA strand. Cleaves the DNA backbone by beta-delta elimination to generate a single-strand break at the site of the removed base with both 3'- and 5'-phosphates. The chain is Formamidopyrimidine-DNA glycosylase from Caulobacter sp. (strain K31).